The primary structure comprises 435 residues: Trigger factor (435 aa).

Positions 161–246 constitute a PPIase FKBP-type domain; that stretch reads GKRVSIDFVG…VNKVEARELP (86 aa).

Belongs to the FKBP-type PPIase family. Tig subfamily.

The protein resides in the cytoplasm. It catalyses the reaction [protein]-peptidylproline (omega=180) = [protein]-peptidylproline (omega=0). Functionally, involved in protein export. Acts as a chaperone by maintaining the newly synthesized protein in an open conformation. Functions as a peptidyl-prolyl cis-trans isomerase. This is Trigger factor from Vibrio campbellii (strain ATCC BAA-1116).